Consider the following 129-residue polypeptide: Small ribosomal subunit protein uS11 (129 aa).

It belongs to the universal ribosomal protein uS11 family. As to quaternary structure, part of the 30S ribosomal subunit. Interacts with proteins S7 and S18. Binds to IF-3.

Its function is as follows. Located on the platform of the 30S subunit, it bridges several disparate RNA helices of the 16S rRNA. Forms part of the Shine-Dalgarno cleft in the 70S ribosome. The protein is Small ribosomal subunit protein uS11 of Mesorhizobium japonicum (strain LMG 29417 / CECT 9101 / MAFF 303099) (Mesorhizobium loti (strain MAFF 303099)).